The following is a 525-amino-acid chain: Ankyrin repeat and SOCS box protein 3 (525 aa).

ANK repeat units lie at residues 9 to 38 (DTCS…SIDV), 42 to 71 (RGWM…SENY), 78 to 107 (EGFC…DPNA), 111 to 140 (EETT…NVNG), 145 to 174 (CGWN…NKEC), 178 to 207 (FGIT…DVNC), 211 to 240 (DKAT…DPDL), 246 to 275 (NWQL…RVCD), 279 to 308 (NKVS…SPDA), 315 to 346 (GFSS…QLNE), and 348 to 373 (HLAY…PSTP). Positions 441 to 505 (MLSARASNSS…HDYLLYAEVL (65 aa)) constitute an SOCS box domain.

The protein belongs to the ankyrin SOCS box (ASB) family. Interacts with ELOB and TNFRSF1B.

It participates in protein modification; protein ubiquitination. Functionally, probable substrate-recognition component of a SCF-like ECS (Elongin-Cullin-SOCS-box protein) E3 ubiquitin-protein ligase complex which mediates the ubiquitination and subsequent proteasomal degradation of target proteins. Recognizes TNFRSF1B. The sequence is that of Ankyrin repeat and SOCS box protein 3 (ASB3) from Bos taurus (Bovine).